We begin with the raw amino-acid sequence, 162 residues long: UPF0460 protein y4vQ (162 aa).

It belongs to the UPF0460 family.

The polypeptide is UPF0460 protein y4vQ (Sinorhizobium fredii (strain NBRC 101917 / NGR234)).